We begin with the raw amino-acid sequence, 445 residues long: Bifunctional protein GlmU (445 aa).

Residues 1–218 (MRALVLAAGK…LLEITGVNTR (218 aa)) are pyrophosphorylase. UDP-N-acetyl-alpha-D-glucosamine contacts are provided by residues 6–9 (LAAG), K20, Q69, 74–75 (GT), 96–98 (YGD), G134, E147, N162, and N216. D98 provides a ligand contact to Mg(2+). Residue N216 coordinates Mg(2+). The interval 219 to 239 (KTLVWLEEQLRMRKIEELLEN) is linker. An N-acetyltransferase region spans residues 240–445 (GVTILDPATT…GWVLKKRKEE (206 aa)). UDP-N-acetyl-alpha-D-glucosamine contacts are provided by R321 and K339. The active-site Proton acceptor is the H351. UDP-N-acetyl-alpha-D-glucosamine-binding residues include Y354 and N365. Acetyl-CoA contacts are provided by residues A368, 374–375 (NY), S393, A411, and R428.

The protein in the N-terminal section; belongs to the N-acetylglucosamine-1-phosphate uridyltransferase family. In the C-terminal section; belongs to the transferase hexapeptide repeat family. As to quaternary structure, homotrimer. Requires Mg(2+) as cofactor.

It is found in the cytoplasm. It catalyses the reaction alpha-D-glucosamine 1-phosphate + acetyl-CoA = N-acetyl-alpha-D-glucosamine 1-phosphate + CoA + H(+). It carries out the reaction N-acetyl-alpha-D-glucosamine 1-phosphate + UTP + H(+) = UDP-N-acetyl-alpha-D-glucosamine + diphosphate. The protein operates within nucleotide-sugar biosynthesis; UDP-N-acetyl-alpha-D-glucosamine biosynthesis; N-acetyl-alpha-D-glucosamine 1-phosphate from alpha-D-glucosamine 6-phosphate (route II): step 2/2. It participates in nucleotide-sugar biosynthesis; UDP-N-acetyl-alpha-D-glucosamine biosynthesis; UDP-N-acetyl-alpha-D-glucosamine from N-acetyl-alpha-D-glucosamine 1-phosphate: step 1/1. It functions in the pathway bacterial outer membrane biogenesis; LPS lipid A biosynthesis. Its function is as follows. Catalyzes the last two sequential reactions in the de novo biosynthetic pathway for UDP-N-acetylglucosamine (UDP-GlcNAc). The C-terminal domain catalyzes the transfer of acetyl group from acetyl coenzyme A to glucosamine-1-phosphate (GlcN-1-P) to produce N-acetylglucosamine-1-phosphate (GlcNAc-1-P), which is converted into UDP-GlcNAc by the transfer of uridine 5-monophosphate (from uridine 5-triphosphate), a reaction catalyzed by the N-terminal domain. The chain is Bifunctional protein GlmU from Thermotoga sp. (strain RQ2).